A 597-amino-acid polypeptide reads, in one-letter code: MILPTALKSRLALEFETLPDPFRRPAARAAGLDPAHAWRLGWLAAVCLAAAAALFTADSGGWPVWAALGAGALPALVSLIFTREDERTQSWLLVLWAVGGSLAAVLTGGVGGAMAAWCLAPVAAASTQDQPKRLAEGAALALIGACVAALTQLSGLAPAAPTGPLAFVLGFLALVTTGLGLAAGLLIGRRRQGARDDRYASEIIGLETLLDGLPHLAIAVRGQGQVTAVRGAAPPGVTRADLVNRGLTGAAAPGDRQRLTAAIAQAHREGSASLTFNPALGVERVVALDMHRVAPNQLVGVLRDITVERHREHALDQARIDAEALAAGRARFLANMSHELRTPLNAIMGFSDIMRARMFGPLSDRYAEYAELIHESGGHLLDLINDVLDMSKIEAERFELQRGVFDAREAVQAAMRLLRVQSDTAGVQLRGVLPPGELEVDADRRALKQIVLNLVSNALKFTPRGGQVTVTAHGYDGVLEIVVADTGVGISPEDLERLGRPYEQAGGAEQRARGTGLGLSLVRAFAQLHGGEMVIESRLGAGTTVSVRLPVLLAPMVAATPTPPAAPEAPSAPEPAPTVEEPPPASLGDNVIAFAPR.

The next 6 membrane-spanning stretches (helical) occupy residues 40 to 57 (LGWLAAVCLAAAAALFTA), 62 to 81 (WPVWAALGAGALPALVSLIF), 91 to 109 (WLLVLWAVGGSLAAVLTGG), 110 to 125 (VGGAMAAWCLAPVAAA), 137 to 158 (GAALALIGACVAALTQLSGLAP), and 159 to 188 (AAPTGPLAFVLGFLALVTTGLGLAAGLLIG). A Histidine kinase domain is found at 335 to 553 (NMSHELRTPL…TVSVRLPVLL (219 aa)). H338 carries the phosphohistidine; by autocatalysis modification. Over residues 561–585 (PTPPAAPEAPSAPEPAPTVEEPPPA) the composition is skewed to pro residues. Positions 561–597 (PTPPAAPEAPSAPEPAPTVEEPPPASLGDNVIAFAPR) are disordered.

It localises to the cell membrane. The catalysed reaction is ATP + protein L-histidine = ADP + protein N-phospho-L-histidine.. Functionally, kinase required for the regulation of cell division and differentiation. Is part of a signal transduction pathway, activating PleD by phosphorylation. This chain is Histidine protein kinase DivJ (divJ), found in Caulobacter vibrioides (strain ATCC 19089 / CIP 103742 / CB 15) (Caulobacter crescentus).